The sequence spans 462 residues: UDP-N-acetylmuramate--L-alanine ligase (462 aa).

An ATP-binding site is contributed by Gly119–Thr125.

The protein belongs to the MurCDEF family.

It localises to the cytoplasm. It catalyses the reaction UDP-N-acetyl-alpha-D-muramate + L-alanine + ATP = UDP-N-acetyl-alpha-D-muramoyl-L-alanine + ADP + phosphate + H(+). The protein operates within cell wall biogenesis; peptidoglycan biosynthesis. Its function is as follows. Cell wall formation. The polypeptide is UDP-N-acetylmuramate--L-alanine ligase (Parabacteroides distasonis (strain ATCC 8503 / DSM 20701 / CIP 104284 / JCM 5825 / NCTC 11152)).